A 371-amino-acid chain; its full sequence is F-box protein At2g41170 (371 aa).

The F-box domain occupies lysine 56–histidine 102.

The polypeptide is F-box protein At2g41170 (Arabidopsis thaliana (Mouse-ear cress)).